The sequence spans 139 residues: Putative nickel-responsive regulator (139 aa).

Positions 79, 90, 92, and 98 each coordinate Ni(2+).

The protein belongs to the transcriptional regulatory CopG/NikR family. Ni(2+) serves as cofactor.

Functionally, transcriptional regulator. The sequence is that of Putative nickel-responsive regulator from Anaeromyxobacter dehalogenans (strain 2CP-C).